A 269-amino-acid polypeptide reads, in one-letter code: Shikimate dehydrogenase (NADP(+)) (269 aa).

Shikimate contacts are provided by residues S17–S19 and T64. K68 functions as the Proton acceptor in the catalytic mechanism. NADP(+) is bound at residue E80. 2 residues coordinate shikimate: N89 and D105. NADP(+) is bound by residues G130 to A134, N154 to K159, and M213. A shikimate-binding site is contributed by Y215. An NADP(+)-binding site is contributed by G237.

This sequence belongs to the shikimate dehydrogenase family. Homodimer.

The enzyme catalyses shikimate + NADP(+) = 3-dehydroshikimate + NADPH + H(+). Its pathway is metabolic intermediate biosynthesis; chorismate biosynthesis; chorismate from D-erythrose 4-phosphate and phosphoenolpyruvate: step 4/7. Involved in the biosynthesis of the chorismate, which leads to the biosynthesis of aromatic amino acids. Catalyzes the reversible NADPH linked reduction of 3-dehydroshikimate (DHSA) to yield shikimate (SA). This Neisseria meningitidis serogroup B (strain ATCC BAA-335 / MC58) protein is Shikimate dehydrogenase (NADP(+)).